The following is a 702-amino-acid chain: Protein crooked neck (702 aa).

HAT repeat units follow at residues aspartate 56–glutamine 88, glutamine 90–lysine 122, lysine 124–methionine 156, glutamate 158–arginine 189, lysine 191–serine 222, glycine 224–glycine 259, lysine 261–lysine 295, valine 305–alanine 337, glycine 339–asparagine 373, glutamate 383–arginine 419, arginine 454–leucine 486, glycine 488–alanine 522, and glycine 524–glycine 555. Residues proline 620–lysine 628 carry the Nuclear localization signal motif. Positions lysine 670–aspartate 702 are disordered. The span at alanine 683 to aspartate 702 shows a compositional bias: low complexity.

Belongs to the crooked-neck family. Colocalizes with a complex containing snRNP proteins. As to expression, transcribed in all cells during embryonic development.

The protein resides in the nucleus speckle. Its function is as follows. May be involved in pre-mRNA splicing process. Involved in embryonic neurogenesis and cell rearrangement during Malpighian tubule morphogenesis. The polypeptide is Protein crooked neck (crn) (Drosophila melanogaster (Fruit fly)).